The sequence spans 542 residues: 1-aminocyclopropane-1-carboxylate synthase 6 (542 aa).

Residues 1–28 (MRRSGNGGAAKKKKKRSASAASERRPRA) form a disordered region. N6-(pyridoxal phosphate)lysine is present on Lys-379.

Belongs to the class-I pyridoxal-phosphate-dependent aminotransferase family. It depends on pyridoxal 5'-phosphate as a cofactor. Expressed in leaves.

The protein resides in the plastid. It is found in the amyloplast membrane. The enzyme catalyses S-adenosyl-L-methionine = 1-aminocyclopropane-1-carboxylate + S-methyl-5'-thioadenosine + H(+). It participates in alkene biosynthesis; ethylene biosynthesis via S-adenosyl-L-methionine; ethylene from S-adenosyl-L-methionine: step 1/2. Functionally, catalyzes the formation of 1-aminocyclopropane-1-carboxylate, a direct precursor of ethylene in higher plants. Required for the regulation of starch grain size in endosperm. The polypeptide is 1-aminocyclopropane-1-carboxylate synthase 6 (Oryza sativa subsp. japonica (Rice)).